A 102-amino-acid chain; its full sequence is NADH-quinone oxidoreductase subunit K (102 aa).

A run of 3 helical transmembrane segments spans residues 5 to 25, 31 to 51, and 62 to 82; these read LAHY…GIFL, IILL…FVAF, and VFVF…LAIL.

Belongs to the complex I subunit 4L family. As to quaternary structure, NDH-1 is composed of 14 different subunits. Subunits NuoA, H, J, K, L, M, N constitute the membrane sector of the complex.

It is found in the cell inner membrane. It catalyses the reaction a quinone + NADH + 5 H(+)(in) = a quinol + NAD(+) + 4 H(+)(out). NDH-1 shuttles electrons from NADH, via FMN and iron-sulfur (Fe-S) centers, to quinones in the respiratory chain. The immediate electron acceptor for the enzyme in this species is believed to be ubiquinone. Couples the redox reaction to proton translocation (for every two electrons transferred, four hydrogen ions are translocated across the cytoplasmic membrane), and thus conserves the redox energy in a proton gradient. In Bordetella avium (strain 197N), this protein is NADH-quinone oxidoreductase subunit K.